A 753-amino-acid chain; its full sequence is 5-methyltetrahydropteroyltriglutamate--homocysteine methyltransferase (753 aa).

5-methyltetrahydropteroyltri-L-glutamate-binding positions include 17 to 20 and Lys-117; that span reads RELK. Residues 431–433 and Glu-484 contribute to the L-homocysteine site; that span reads IGS. L-methionine-binding positions include 431–433 and Glu-484; that span reads IGS. 5-methyltetrahydropteroyltri-L-glutamate contacts are provided by residues 515 to 516 and Trp-561; that span reads RC. Residue Asp-599 participates in L-homocysteine binding. Asp-599 contacts L-methionine. 5-methyltetrahydropteroyltri-L-glutamate is bound at residue Glu-605. Residues His-641, Cys-643, and Glu-665 each coordinate Zn(2+). His-694 serves as the catalytic Proton donor. Cys-726 is a binding site for Zn(2+).

This sequence belongs to the vitamin-B12 independent methionine synthase family. It depends on Zn(2+) as a cofactor.

It carries out the reaction 5-methyltetrahydropteroyltri-L-glutamate + L-homocysteine = tetrahydropteroyltri-L-glutamate + L-methionine. It functions in the pathway amino-acid biosynthesis; L-methionine biosynthesis via de novo pathway; L-methionine from L-homocysteine (MetE route): step 1/1. In terms of biological role, catalyzes the transfer of a methyl group from 5-methyltetrahydrofolate to homocysteine resulting in methionine formation. The protein is 5-methyltetrahydropteroyltriglutamate--homocysteine methyltransferase of Escherichia coli O8 (strain IAI1).